A 291-amino-acid chain; its full sequence is N-acetylmannosamine kinase (291 aa).

ATP is bound by residues alanine 5–lysine 12 and glycine 132–cysteine 139. Residues histidine 156, cysteine 166, cysteine 168, and cysteine 173 each contribute to the Zn(2+) site.

The protein belongs to the ROK (NagC/XylR) family. NanK subfamily. As to quaternary structure, homodimer.

The enzyme catalyses an N-acyl-D-mannosamine + ATP = an N-acyl-D-mannosamine 6-phosphate + ADP + H(+). It participates in amino-sugar metabolism; N-acetylneuraminate degradation; D-fructose 6-phosphate from N-acetylneuraminate: step 2/5. Catalyzes the phosphorylation of N-acetylmannosamine (ManNAc) to ManNAc-6-P. In Salmonella paratyphi A (strain ATCC 9150 / SARB42), this protein is N-acetylmannosamine kinase.